The primary structure comprises 613 residues: YTH domain-containing family protein 2 (613 aa).

3 disordered regions span residues 1 to 43 (MSAS…AQPR), 215 to 234 (SQVSTAPTMPPASMAPAKTA), and 244 to 396 (AKPQ…TVPA). Residues 2-397 (SASSLLEQRP…GMGGITVPAE (396 aa)) are localization to mRNA processing bodies (P-bodies). A compositionally biased stretch (polar residues) spans 16-27 (NKVQNGAVTQKD). Low complexity-rich tracts occupy residues 218 to 234 (STAPTMPPASMAPAKTA), 295 to 307 (NGQPPNQSSPQPG), and 345 to 360 (PPQLSQGPPASQPSQP). An interaction with m6A-containing mRNAs region spans residues 398-613 (PHPVLEKLRM…RMQDRQGRVK (216 aa)). A YTH domain is found at 423-557 (GRVFIIKSYS…DKARQVLKII (135 aa)). RNA-binding positions include 429-431 (KSY), Asp-435, 445-446 (WC), Asn-475, Trp-499, and Trp-504. Basic and acidic residues-rich tracts occupy residues 578 to 587 (EEEESVKKVE) and 604 to 613 (RMQDRQGRVK). The tract at residues 578 to 613 (EEEESVKKVEVQGSDPYSNNSSRSHYRMQDRQGRVK) is disordered.

The protein belongs to the YTHDF family. YTHDF2 subfamily.

The protein localises to the cytoplasm. It localises to the cytosol. The protein resides in the P-body. It is found in the stress granule. Its subcellular location is the nucleus. Functionally, specifically recognizes and binds N6-methyladenosine (m6A)-containing RNAs, and regulates their stability. M6A is a modification present at internal sites of mRNAs and some non-coding RNAs and plays a role in mRNA stability and processing. Acts as a regulator of mRNA stability by promoting degradation of m6A-containing mRNAs. The YTHDF paralogs (ythdf1, ythdf2 and ythdf3) share m6A-containing mRNAs targets and act redundantly to mediate mRNA degradation and cellular differentiation. Plays a key role in maternal-to-zygotic transition during early embryonic development, the process during which maternally inherited mRNAs are degraded: acts by binding m6A-containing maternal mRNAs and promoting their degradation. More than one-third of maternal mRNAs can be modified by m6A. Binding to m6A-containing mRNAs results in mRNA degradation. Also involved in hematopoietic stem cells specification by binding to m6A-containing mRNAs, such as notch1a, and promote their degradation. The decreased Notch signaling following notch1a degradation promotes endothelial to hematopoietic transition. Promotes formation of phase-separated membraneless compartments, such as P-bodies or stress granules, by undergoing liquid-liquid phase separation upon binding to mRNAs containing multiple m6A-modified residues: polymethylated mRNAs act as a multivalent scaffold for the binding of YTHDF proteins, juxtaposing their disordered regions and thereby leading to phase separation. The resulting mRNA-YTHDF complexes then partition into different endogenous phase-separated membraneless compartments, such as P-bodies, stress granules or neuronal RNA granules. This is YTH domain-containing family protein 2 from Danio rerio (Zebrafish).